The sequence spans 265 residues: Indole-3-glycerol phosphate synthase (265 aa).

The protein belongs to the TrpC family.

It carries out the reaction 1-(2-carboxyphenylamino)-1-deoxy-D-ribulose 5-phosphate + H(+) = (1S,2R)-1-C-(indol-3-yl)glycerol 3-phosphate + CO2 + H2O. It functions in the pathway amino-acid biosynthesis; L-tryptophan biosynthesis; L-tryptophan from chorismate: step 4/5. This chain is Indole-3-glycerol phosphate synthase, found in Xanthomonas campestris pv. campestris (strain 8004).